Here is a 319-residue protein sequence, read N- to C-terminus: Thioredoxin reductase (319 aa).

37–44 (ERGVPGGQ) provides a ligand contact to FAD. A disulfide bridge connects residues Cys136 and Cys139. 279–288 (DVRAKSLRQI) is a binding site for FAD.

The protein belongs to the class-II pyridine nucleotide-disulfide oxidoreductase family. In terms of assembly, homodimer. The cofactor is FAD.

It localises to the cytoplasm. It carries out the reaction [thioredoxin]-dithiol + NADP(+) = [thioredoxin]-disulfide + NADPH + H(+). This chain is Thioredoxin reductase (trxB), found in Listeria monocytogenes serovar 1/2a (strain ATCC BAA-679 / EGD-e).